The sequence spans 950 residues: 5'-3' exoribonuclease 2 (950 aa).

The segment at P262 to G278 adopts a CCHC-type zinc-finger fold. At K286 the chain carries N6-acetyllysine. Positions K408–N508 are disordered. The segment covering R416 to K426 has biased composition (basic residues). The residue at position 439 (T439) is a Phosphothreonine. Over residues S445 to R458 the composition is skewed to polar residues. Phosphoserine is present on residues S448, S471, S473, S475, S482, S487, S499, S501, and S678. The segment covering N468–S482 has biased composition (low complexity). Residues R824, R847, and R851 each carry the asymmetric dimethylarginine; alternate modification. An omega-N-methylarginine; alternate mark is found at R824, R847, and R851. An Asymmetric dimethylarginine modification is found at R880. R883 carries the asymmetric dimethylarginine; alternate modification. At R883 the chain carries Omega-N-methylarginine; alternate. R895 is modified (omega-N-methylarginine). Residues M911–N950 form a disordered region. Residues P920–K937 show a composition bias toward basic and acidic residues. At R946 the chain carries Asymmetric dimethylarginine; alternate. An Omega-N-methylarginine; alternate modification is found at R946.

The protein belongs to the 5'-3' exonuclease family. XRN2/RAT1 subfamily. As to quaternary structure, interacts with POLR2A and SMN1/SMN2. Interacts with CDKN2AIP and NKRF. Interacts with CDKN2AIPNL; the interaction is direct. Interacts with TRIM71 (via NHL repeats) in an RNA-dependent manner. Interacts with DHX34; the interaction is RNA-independent. As to expression, expressed in the spleen, thymus, prostate, testis, ovary, small intestine, colon, peripheral blood leukocytes, heart, brain, placenta, lung, liver, skeletal muscle, kidney, and pancreas. Isoform 2 is expressed predominantly in peripheral blood leukocytes.

Its subcellular location is the nucleus. It is found in the nucleolus. Possesses 5'-&gt;3' exoribonuclease activity. May promote the termination of transcription by RNA polymerase II. During transcription termination, cleavage at the polyadenylation site liberates a 5' fragment which is subsequently processed to form the mature mRNA and a 3' fragment which remains attached to the elongating polymerase. The processive degradation of this 3' fragment by this protein may promote termination of transcription. Binds to RNA polymerase II (RNAp II) transcription termination R-loops formed by G-rich pause sites. The sequence is that of 5'-3' exoribonuclease 2 (XRN2) from Homo sapiens (Human).